Here is a 232-residue protein sequence, read N- to C-terminus: Ribonuclease 3 (232 aa).

The RNase III domain maps to 6-133 (LKEIEENLGV…IIAAVYLDKG (128 aa)). Glu-46 provides a ligand contact to Mg(2+). Asp-50 is a catalytic residue. Mg(2+) is bound by residues Asp-119 and Glu-122. Glu-122 is an active-site residue. In terms of domain architecture, DRBM spans 160–229 (DFKTKLQELL…AKQALDILEG (70 aa)).

Belongs to the ribonuclease III family. In terms of assembly, homodimer. The cofactor is Mg(2+).

It is found in the cytoplasm. The catalysed reaction is Endonucleolytic cleavage to 5'-phosphomonoester.. Its function is as follows. Digests double-stranded RNA. Involved in the processing of primary rRNA transcript to yield the immediate precursors to the large and small rRNAs (23S and 16S). Processes some mRNAs, and tRNAs when they are encoded in the rRNA operon. Processes pre-crRNA and tracrRNA of type II CRISPR loci if present in the organism. The polypeptide is Ribonuclease 3 (Clostridium beijerinckii (strain ATCC 51743 / NCIMB 8052) (Clostridium acetobutylicum)).